The chain runs to 250 residues: Ribosomal RNA small subunit methyltransferase J (250 aa).

Residues 96-97 (RD) and Asp-168 each bind S-adenosyl-L-methionine.

This sequence belongs to the methyltransferase superfamily. RsmJ family.

The protein localises to the cytoplasm. It carries out the reaction guanosine(1516) in 16S rRNA + S-adenosyl-L-methionine = N(2)-methylguanosine(1516) in 16S rRNA + S-adenosyl-L-homocysteine + H(+). Specifically methylates the guanosine in position 1516 of 16S rRNA. This chain is Ribosomal RNA small subunit methyltransferase J, found in Neisseria gonorrhoeae (strain ATCC 700825 / FA 1090).